The primary structure comprises 236 residues: DCN1-like protein 5 (236 aa).

Residues Ser-9, Ser-40, and Ser-47 each carry the phosphoserine modification. The DCUN1 domain occupies 45–231 (FSSKKCLAWF…LLDEFVEWHK (187 aa)).

In terms of assembly, part of a complex that contains DCUN1D5, CUL1 and RBX1; this interaction is bridged by CUL1. Interacts (via the DCUN1 domain) with the unneddylated cullins: interacts with CUL1, CUL2, CUL3, CUL4A, CUL4B and CUL5; these interactions promote the cullin neddylation and the identity of the cullin dictates the affinity of the interaction. Interacts (via DCUN1 domain) with UBE2M (N-terminally acetylated form) and probably with UBE2F (N-terminally acetylated form). May also interact with regulators or subunits of cullin-RING ligases such as RBX1, RNF7, ELOB and DDB1; these interactions are bridged by cullins. Interacts with CAND1; this interaction is bridged by cullins and strongly inhibits the neddylation of cullins. These CAND-cullin-DCNL complexes can only be neddylated in the presence of a substrate adapter. Phosphorylation at Ser-40 is independent of cullin's interaction. Phosphorylated in response to both TICAM1 and MYD88 dependent Toll-like receptor (TLR) pathway activation. Phosphorylated in response to IL1B stimulation.

It is found in the nucleus. The protein resides in the cytoplasm. The protein localises to the cytoskeleton. It localises to the spindle. Functionally, contributes to the neddylation of all cullins by transferring NEDD8 from N-terminally acetylated NEDD8-conjugating E2s enzyme to different cullin C-terminal domain-RBX complexes which is necessary for the activation of cullin-RING E3 ubiquitin ligases (CRLs). May play a role in DNA damage response and may participate in cell proliferation and anchorage-independent cell growth. The chain is DCN1-like protein 5 (DCUN1D5) from Bos taurus (Bovine).